The sequence spans 260 residues: UPF0246 protein Bcep1808_2308 (260 aa).

Belongs to the UPF0246 family.

The protein is UPF0246 protein Bcep1808_2308 of Burkholderia vietnamiensis (strain G4 / LMG 22486) (Burkholderia cepacia (strain R1808)).